Consider the following 179-residue polypeptide: Large ribosomal subunit protein uL5 (179 aa).

This sequence belongs to the universal ribosomal protein uL5 family. Part of the 50S ribosomal subunit; part of the 5S rRNA/L5/L18/L25 subcomplex. Contacts the 5S rRNA and the P site tRNA. Forms a bridge to the 30S subunit in the 70S ribosome.

Its function is as follows. This is one of the proteins that bind and probably mediate the attachment of the 5S RNA into the large ribosomal subunit, where it forms part of the central protuberance. In the 70S ribosome it contacts protein S13 of the 30S subunit (bridge B1b), connecting the 2 subunits; this bridge is implicated in subunit movement. Contacts the P site tRNA; the 5S rRNA and some of its associated proteins might help stabilize positioning of ribosome-bound tRNAs. The sequence is that of Large ribosomal subunit protein uL5 from Oceanobacillus iheyensis (strain DSM 14371 / CIP 107618 / JCM 11309 / KCTC 3954 / HTE831).